The primary structure comprises 562 residues: Glutamyl-tRNA(Gln) amidotransferase subunit B, chloroplastic/mitochondrial (562 aa).

Residues 48–76 (SVASNSKREPRPVKTRVMTQERGSGETQT) form a disordered region. Polar residues predominate over residues 64–76 (VMTQERGSGETQT).

It belongs to the GatB/GatE family. GatB subfamily. As to quaternary structure, subunit of the heterotrimeric GatCAB amidotransferase (AdT) complex, composed of A, B and C subunits.

Its subcellular location is the mitochondrion. It is found in the plastid. It localises to the chloroplast. The catalysed reaction is L-glutamyl-tRNA(Gln) + L-glutamine + ATP + H2O = L-glutaminyl-tRNA(Gln) + L-glutamate + ADP + phosphate + H(+). Its function is as follows. Allows the formation of correctly charged Gln-tRNA(Gln) through the transamidation of misacylated Glu-tRNA(Gln) in chloroplasts and mitochondria. The reaction takes place in the presence of glutamine and ATP through an activated gamma-phospho-Glu-tRNA(Gln). This is Glutamyl-tRNA(Gln) amidotransferase subunit B, chloroplastic/mitochondrial from Physcomitrium patens (Spreading-leaved earth moss).